A 161-amino-acid polypeptide reads, in one-letter code: Nucleotide-binding protein Tcr_1902 (161 aa).

This sequence belongs to the YajQ family.

In terms of biological role, nucleotide-binding protein. In Hydrogenovibrio crunogenus (strain DSM 25203 / XCL-2) (Thiomicrospira crunogena), this protein is Nucleotide-binding protein Tcr_1902.